A 662-amino-acid polypeptide reads, in one-letter code: Glycogen debranching enzyme (662 aa).

D338 (nucleophile) is an active-site residue. E373 (proton donor) is an active-site residue.

The protein belongs to the glycosyl hydrolase 13 family.

It catalyses the reaction Hydrolysis of (1-&gt;6)-alpha-D-glucosidic linkages to branches with degrees of polymerization of three or four glucose residues in limit dextrin.. Its pathway is glycan degradation; glycogen degradation. In terms of biological role, removes maltotriose and maltotetraose chains that are attached by 1,6-alpha-linkage to the limit dextrin main chain, generating a debranched limit dextrin. The protein is Glycogen debranching enzyme of Yersinia enterocolitica serotype O:8 / biotype 1B (strain NCTC 13174 / 8081).